The following is a 480-amino-acid chain: Aromatic-L-amino-acid decarboxylase (480 aa).

Met1 carries the N-acetylmethionine modification. Repeat copies occupy residues Gly58–Glu115 and Met118–Ala178. The interval Gly58 to Ala178 is 2 X approximate tandem repeats. Residue Thr82 participates in substrate binding. Residues Ala148 and Ser149 each contribute to the pyridoxal 5'-phosphate site. His192 is a substrate binding site. Pyridoxal 5'-phosphate is bound by residues Thr246 and Asn300. N6-(pyridoxal phosphate)lysine is present on Lys303.

Belongs to the group II decarboxylase family. As to quaternary structure, homodimer. The cofactor is pyridoxal 5'-phosphate.

The enzyme catalyses L-dopa + H(+) = dopamine + CO2. The catalysed reaction is 5-hydroxy-L-tryptophan + H(+) = serotonin + CO2. It functions in the pathway catecholamine biosynthesis; dopamine biosynthesis; dopamine from L-tyrosine: step 2/2. Catalyzes the decarboxylation of L-3,4-dihydroxyphenylalanine (DOPA) to dopamine and L-5-hydroxytryptophan to serotonin. The protein is Aromatic-L-amino-acid decarboxylase (DDC) of Cavia porcellus (Guinea pig).